Here is a 179-residue protein sequence, read N- to C-terminus: ATP synthase subunit b, chloroplastic (179 aa).

The chain crosses the membrane as a helical span at residues 28 to 46 (LLNILALVAILVYTGKDFL).

It belongs to the ATPase B chain family. In terms of assembly, F-type ATPases have 2 components, F(1) - the catalytic core - and F(0) - the membrane proton channel. F(1) has five subunits: alpha(3), beta(3), gamma(1), delta(1), epsilon(1). F(0) has four main subunits: a(1), b(1), b'(1) and c(10-14). The alpha and beta chains form an alternating ring which encloses part of the gamma chain. F(1) is attached to F(0) by a central stalk formed by the gamma and epsilon chains, while a peripheral stalk is formed by the delta, b and b' chains.

It is found in the plastid. Its subcellular location is the chloroplast thylakoid membrane. F(1)F(0) ATP synthase produces ATP from ADP in the presence of a proton or sodium gradient. F-type ATPases consist of two structural domains, F(1) containing the extramembraneous catalytic core and F(0) containing the membrane proton channel, linked together by a central stalk and a peripheral stalk. During catalysis, ATP synthesis in the catalytic domain of F(1) is coupled via a rotary mechanism of the central stalk subunits to proton translocation. Its function is as follows. Component of the F(0) channel, it forms part of the peripheral stalk, linking F(1) to F(0). The polypeptide is ATP synthase subunit b, chloroplastic (Thalassiosira pseudonana (Marine diatom)).